Reading from the N-terminus, the 91-residue chain is UPF0298 protein OB1449 (91 aa).

It belongs to the UPF0298 family.

Its subcellular location is the cytoplasm. In Oceanobacillus iheyensis (strain DSM 14371 / CIP 107618 / JCM 11309 / KCTC 3954 / HTE831), this protein is UPF0298 protein OB1449.